The following is a 726-amino-acid chain: Catalase-peroxidase (726 aa).

The segment at residues 93–216 is a cross-link (tryptophyl-tyrosyl-methioninium (Trp-Tyr) (with M-242)); sequence WHSAGTYRVH…LAAVQMGLIY (124 aa). Catalysis depends on His-94, which acts as the Proton acceptor. Residues 216–242 constitute a cross-link (tryptophyl-tyrosyl-methioninium (Tyr-Met) (with W-93)); it reads YVNPEGPNGNPDPVAAAVDIRETFTRM. Heme b is bound at residue His-257. Positions 471–490 are disordered; the sequence is GSDKRGGANGARIRLSPQKD.

It belongs to the peroxidase family. Peroxidase/catalase subfamily. In terms of assembly, homodimer or homotetramer. It depends on heme b as a cofactor. Post-translationally, formation of the three residue Trp-Tyr-Met cross-link is important for the catalase, but not the peroxidase activity of the enzyme.

It carries out the reaction H2O2 + AH2 = A + 2 H2O. The enzyme catalyses 2 H2O2 = O2 + 2 H2O. Functionally, bifunctional enzyme with both catalase and broad-spectrum peroxidase activity. This chain is Catalase-peroxidase, found in Methylacidiphilum infernorum (isolate V4) (Methylokorus infernorum (strain V4)).